The following is a 111-amino-acid chain: uncharacterized protein (111 aa).

Residues 1–18 (MGKSMEEGIFVKVFPSKA) form the signal peptide.

This is an uncharacterized protein from Acidianus convivator (ATV).